Here is a 285-residue protein sequence, read N- to C-terminus: Probable endonuclease 4 (285 aa).

Histidine 69, histidine 109, glutamate 145, aspartate 179, histidine 182, histidine 216, aspartate 229, histidine 231, and glutamate 261 together coordinate Zn(2+).

Belongs to the AP endonuclease 2 family. It depends on Zn(2+) as a cofactor.

It carries out the reaction Endonucleolytic cleavage to 5'-phosphooligonucleotide end-products.. In terms of biological role, endonuclease IV plays a role in DNA repair. It cleaves phosphodiester bonds at apurinic or apyrimidinic (AP) sites, generating a 3'-hydroxyl group and a 5'-terminal sugar phosphate. The sequence is that of Probable endonuclease 4 from Shigella dysenteriae serotype 1 (strain Sd197).